Consider the following 910-residue polypeptide: Triacylglycerol lipase 4 (910 aa).

Residues 51-66 (SKDNSDVERVEEDAGK) show a composition bias toward basic and acidic residues. The tract at residues 51 to 120 (SKDNSDVERV…TDEGEDERQG (70 aa)) is disordered. A Phosphoserine modification is found at S55. Residues 70 to 85 (TGKNKTTNKVNFNLDT) show a composition bias toward polar residues. The segment covering 90 to 116 (KLDDDQETVTENENNDIEMVETDEGED) has biased composition (acidic residues). The 202-residue stretch at 282 to 483 (LVLSGGGTFG…DNDLPISRLS (202 aa)) folds into the PNPLA domain. The GXGXXG signature appears at 286-291 (GGGTFG). The GXSXG signature appears at 313 to 317 (GSSAG). S315 (nucleophile) is an active-site residue. Residue D470 is the Proton acceptor of the active site. 2 disordered regions span residues 657-683 (EQTS…DNHI) and 713-777 (SPSG…PILQ). Polar residues predominate over residues 666 to 683 (PENSTLLTRTPTKGDNHI). The residue at position 675 (T675) is a Phosphothreonine; by Cdk1. Phosphoserine occurs at positions 737, 749, 751, and 836. The segment covering 739-768 (TISTSRRPAKSFSFSVASPTSRMLRQSSKI) has biased composition (polar residues). The tract at residues 874–910 (RRHSIDGRPPSQATKSSPFRSRPSSSTQHKSTTSFTQ) is disordered. Over residues 889–899 (SSPFRSRPSSS) the composition is skewed to low complexity. S890 bears the Phosphoserine; by Cdk1 mark. The span at 900 to 910 (TQHKSTTSFTQ) shows a compositional bias: polar residues.

In terms of processing, phosphorylation at Thr-675 and Ser-890 by Cdk1/CDC28 stimulates enzyme activity in vivo.

The protein resides in the lipid droplet. The catalysed reaction is a triacylglycerol + H2O = a diacylglycerol + a fatty acid + H(+). The enzyme catalyses 1,2,3-tri-(9Z-octadecenoyl)-glycerol + H2O = di-(9Z)-octadecenoylglycerol + (9Z)-octadecenoate + H(+). It carries out the reaction 1,2-dihexadecanoyl-sn-glycero-3-phosphocholine + H2O = 1-hexadecanoyl-sn-glycero-3-phosphocholine + hexadecanoate + H(+). It catalyses the reaction cholesteryl (9Z-octadecenoate) + H2O = cholesterol + (9Z)-octadecenoate + H(+). The catalysed reaction is 1-(9Z-octadecenoyl)-sn-glycero-3-phosphate + (9Z)-octadecenoyl-CoA = 1,2-di-(9Z-octadecenoyl)-sn-glycero-3-phosphate + CoA. With respect to regulation, phosphorylated and activated by cyclin-dependent kinase 1 (Cdk1/CDC28). Loses its lipolytic activity in cells lacking nonpolar lipids, but retains its side activity as lysophospholipid acyltransferase. Functionally, lipid particle-localized triacylglycerol (TAG) lipase. The lipid droplet/particle is a lipid storage compartment which serves as a depot of energy and building blocks for membrane lipid biosynthesis. Involved in the mobilization of the non-polar storage lipids triacylglycerols (TAGs) from lipid particles by hydrolysis of TAGs, releasing and supplying specific fatty acids to the appropriate metabolic pathways. Also has steryl ester (SE) hydrolase and phospholipase A(2) (PLA(2)) activities, and catalyzes the acylation of lysophosphatidic acid (LPA). Contributes to early bud formation in late G1 phase of the cell cycle upon phosphorylation and activation by cyclin-dependent kinase 1 (Cdk1/CDC28). The chain is Triacylglycerol lipase 4 (TGL4) from Saccharomyces cerevisiae (strain ATCC 204508 / S288c) (Baker's yeast).